Here is a 1096-residue protein sequence, read N- to C-terminus: DNA-directed RNA polymerase subunit beta (1096 aa).

A disordered region spans residues 1070–1096 (LMQDVNPRRSTPSRPTYESLGSDYQED).

This sequence belongs to the RNA polymerase beta chain family. In terms of assembly, in cyanobacteria the RNAP catalytic core is composed of 2 alpha, 1 beta, 1 beta', 1 gamma and 1 omega subunit. When a sigma factor is associated with the core the holoenzyme is formed, which can initiate transcription.

It catalyses the reaction RNA(n) + a ribonucleoside 5'-triphosphate = RNA(n+1) + diphosphate. In terms of biological role, DNA-dependent RNA polymerase catalyzes the transcription of DNA into RNA using the four ribonucleoside triphosphates as substrates. The protein is DNA-directed RNA polymerase subunit beta of Prochlorococcus marinus (strain MIT 9211).